The chain runs to 101 residues: Small ribosomal subunit protein uS14 (101 aa).

Belongs to the universal ribosomal protein uS14 family. In terms of assembly, part of the 30S ribosomal subunit. Contacts proteins S3 and S10.

Functionally, binds 16S rRNA, required for the assembly of 30S particles and may also be responsible for determining the conformation of the 16S rRNA at the A site. This Maricaulis maris (strain MCS10) (Caulobacter maris) protein is Small ribosomal subunit protein uS14.